A 556-amino-acid polypeptide reads, in one-letter code: Putative solute carrier family 22 member 31 (556 aa).

Residues 1–23 are Cytoplasmic-facing; it reads MEQEARVLRAAGGFGRARRLLAS. A helical membrane pass occupies residues 24-44; it reads ASWVPCIVLGLVLSSEELLTA. Over 45-128 the chain is Extracellular; it reads QPAPHCRPDP…WNLVCGDGWK (84 aa). Residues 129–149 traverse the membrane as a helical segment; it reads VPLEQVSHLLGWLLGCVILGA. Over 150–157 the chain is Cytoplasmic; sequence GCDRFGRR. The helical transmembrane segment at 158–178 threads the bilayer; that stretch reads AVFVASLVLTTGLGASEALAA. At 179–182 the chain is on the extracellular side; that stretch reads SFPT. The chain crosses the membrane as a helical span at residues 183-203; the sequence is LLVLRLLHGGTLAGALLALYL. Residues 204–218 lie on the Cytoplasmic side of the membrane; it reads ARLELCDPPHRLAFS. The chain crosses the membrane as a helical span at residues 219–239; that stretch reads MGAGLFSVVGTLLLPGLAALV. At 240-246 the chain is on the extracellular side; sequence QDWRLLQ. Residues 247 to 267 traverse the membrane as a helical segment; sequence GLGALMSGLLLLFWGFPALFP. Residues 268–339 are Cytoplasmic-facing; that stretch reads ESPCWLLATG…LRTRVTWRNG (72 aa). Residues 340–357 form a helical membrane-spanning segment; that stretch reads LILGFSSLVGGGIRASFR. Over 358–366 the chain is Extracellular; the sequence is RSLAPQVPT. The chain crosses the membrane as a helical span at residues 367-387; sequence FYLPYFLEAGLEAAALVFLLL. Topologically, residues 388 to 395 are cytoplasmic; sequence TADCCGRR. The helical transmembrane segment at 396-416 threads the bilayer; sequence PVLLLGTMVTGLASLLLLAGA. Over 417–420 the chain is Extracellular; it reads QYLP. A helical membrane pass occupies residues 421–441; the sequence is GWTVLFLSVLGLLASRAVSAL. Topologically, residues 442 to 448 are cytoplasmic; it reads SSLFAAE. A helical membrane pass occupies residues 449–469; that stretch reads VFPTVIRGAGLGLVLGAGFLG. At 470 to 483 the chain is on the extracellular side; sequence QAAGPLDTLHGRQG. Residues 484–504 traverse the membrane as a helical segment; the sequence is FFLQQVVFASLAVLALLCVLL. Topologically, residues 505-556 are cytoplasmic; it reads LPESRSRGLPQSLQDADRLRRSPLLRGRPRQDHLPLLPPSNSYWAGHTPEQH. Residues 524 to 556 are disordered; it reads RRSPLLRGRPRQDHLPLLPPSNSYWAGHTPEQH.

It belongs to the major facilitator (TC 2.A.1) superfamily. Organic cation transporter (TC 2.A.1.19) family.

The protein localises to the membrane. In terms of biological role, organic anion transporter that mediates the uptake of ions. The polypeptide is Putative solute carrier family 22 member 31 (Homo sapiens (Human)).